A 106-amino-acid polypeptide reads, in one-letter code: Nucleoid-associated protein XC_3243 (106 aa).

Positions 82–106 (DAESKERMGSATAGMQLPPGMKLPF) are disordered.

This sequence belongs to the YbaB/EbfC family. Homodimer.

Its subcellular location is the cytoplasm. The protein localises to the nucleoid. Its function is as follows. Binds to DNA and alters its conformation. May be involved in regulation of gene expression, nucleoid organization and DNA protection. The chain is Nucleoid-associated protein XC_3243 from Xanthomonas campestris pv. campestris (strain 8004).